We begin with the raw amino-acid sequence, 457 residues long: MALWGGRFTQAADQRFKQFNDSLRFDYRLAEQDIVGSVAWSKALVTVGVLTAEEQAQLEEALNVLLEDVRARPQQILESDAEDIHSWVEGKLIDKVGQLGKKLHTGRSRNDQVATDLKLWCKDTVSELLTANRQLQSALVETAQNNQDAVMPGYTHLQRAQPVTFAHWCLAYVEMLARDESRLQDALKRLDVSPLGCGALAGTAYEIDREQLAGWLGFASATRNSLDSVSDRDHVLELLSAAAIGMVHLSRFAEDLIFFNTGEAGFVELSDRVTSGSSLMPQKKNPDALELIRGKCGRVQGALTGMMMTLKGLPLAYNKDMQEDKEGLFDALDTWLDCLHMAALVLDGIQVKRPRCQEAAQQGYANATELADYLVAKGVPFREAHHIVGEAVVEAIRQGKPLEDLPLSELQKFSLVIGEDVYPILSLQSCLDKRAAKGGVSPQQVAQAIAFAQARLG.

The protein belongs to the lyase 1 family. Argininosuccinate lyase subfamily.

The protein localises to the cytoplasm. The enzyme catalyses 2-(N(omega)-L-arginino)succinate = fumarate + L-arginine. It functions in the pathway amino-acid biosynthesis; L-arginine biosynthesis; L-arginine from L-ornithine and carbamoyl phosphate: step 3/3. In Escherichia coli O127:H6 (strain E2348/69 / EPEC), this protein is Argininosuccinate lyase.